The chain runs to 468 residues: UDP-N-acetylmuramate--L-alanine ligase (468 aa).

Residue 121–127 (GSHGKTT) coordinates ATP.

Belongs to the MurCDEF family.

Its subcellular location is the cytoplasm. The catalysed reaction is UDP-N-acetyl-alpha-D-muramate + L-alanine + ATP = UDP-N-acetyl-alpha-D-muramoyl-L-alanine + ADP + phosphate + H(+). The protein operates within cell wall biogenesis; peptidoglycan biosynthesis. Cell wall formation. The chain is UDP-N-acetylmuramate--L-alanine ligase from Borrelia garinii subsp. bavariensis (strain ATCC BAA-2496 / DSM 23469 / PBi) (Borreliella bavariensis).